A 546-amino-acid chain; its full sequence is Elongator complex protein 3 (546 aa).

One can recognise a Radical SAM core domain in the interval 81–371; it reads RTASGIAVVA…YRVQRDIPMP (291 aa). C98, C108, and C111 together coordinate [4Fe-4S] cluster. Acetyl-CoA is bound by residues K163, 473 to 476, 496 to 498, and Y529; these read ELHV and FGM. One can recognise an N-acetyltransferase domain in the interval 395–546; it reads TQCRDVRTRE…EGPYMVKRLQ (152 aa).

The protein belongs to the ELP3 family. As to quaternary structure, component of the elongator complex. [4Fe-4S] cluster is required as a cofactor.

It localises to the cytoplasm. The protein resides in the nucleus. The enzyme catalyses uridine(34) in tRNA + acetyl-CoA + S-adenosyl-L-methionine + H2O = 5-(carboxymethyl)uridine(34) in tRNA + 5'-deoxyadenosine + L-methionine + CoA + 2 H(+). It participates in tRNA modification; 5-methoxycarbonylmethyl-2-thiouridine-tRNA biosynthesis. Catalytic tRNA acetyltransferase subunit of the elongator complex which is required for multiple tRNA modifications, including mcm5U (5-methoxycarbonylmethyl uridine), mcm5s2U (5-methoxycarbonylmethyl-2-thiouridine), and ncm5U (5-carbamoylmethyl uridine). In the elongator complex, acts as a tRNA uridine(34) acetyltransferase by mediating formation of carboxymethyluridine in the wobble base at position 34 in tRNAs. The chain is Elongator complex protein 3 from Gallus gallus (Chicken).